Consider the following 344-residue polypeptide: Fructose-1,6-bisphosphatase class 1 (344 aa).

Residues Glu92, Asp115, Leu117, and Asp118 each coordinate Mg(2+). Substrate-binding positions include 118–121 (DGSS), Asn211, Tyr244, and Lys274. Glu280 provides a ligand contact to Mg(2+).

It belongs to the FBPase class 1 family. Homotetramer. It depends on Mg(2+) as a cofactor.

The protein localises to the cytoplasm. The catalysed reaction is beta-D-fructose 1,6-bisphosphate + H2O = beta-D-fructose 6-phosphate + phosphate. It participates in carbohydrate biosynthesis; gluconeogenesis. The polypeptide is Fructose-1,6-bisphosphatase class 1 (Aeromonas hydrophila subsp. hydrophila (strain ATCC 7966 / DSM 30187 / BCRC 13018 / CCUG 14551 / JCM 1027 / KCTC 2358 / NCIMB 9240 / NCTC 8049)).